The primary structure comprises 424 residues: CinA-like protein (424 aa).

This sequence belongs to the CinA family.

The protein is CinA-like protein of Shewanella frigidimarina (strain NCIMB 400).